The sequence spans 75 residues: Large ribosomal subunit protein uL29 (75 aa).

Belongs to the universal ribosomal protein uL29 family.

The polypeptide is Large ribosomal subunit protein uL29 (Ureaplasma urealyticum serovar 10 (strain ATCC 33699 / Western)).